We begin with the raw amino-acid sequence, 347 residues long: MKNDIFLKSLKKEPIARYPVWLMRQAGRYLPEYRAIRQKYKSFLDFCKNVEDAAIVSLQPVDILGVDAVIMFSDILVLLEPMGIKVSFEAGEGPVLDHNFDFKNLKSQGISGDLSYVFELLKVLKEKSPVPVIGFCGAPFTLASYVIEKESSRDFTKTKVFMYENQKDFHILMEKLSEALVEYIDHQIKSGADVIQIFDSWSMSLSRFAYKEYVYDYNAFIIKSIKQKHPNTPIIYFFRGSSSHIEDAVDLGADALSVDWSVCINDVCKRYPDLVFQGNLEPQILLLDKENIRKHVEEFVMCIPRDTAFVVNLGHGITPDVSKDNVKYFVECVKEVSYGKRNLFKKC.

Substrate-binding positions include 24–28, D74, Y145, S200, and H315; that span reads RQAGR.

This sequence belongs to the uroporphyrinogen decarboxylase family. As to quaternary structure, homodimer.

It localises to the cytoplasm. It carries out the reaction uroporphyrinogen III + 4 H(+) = coproporphyrinogen III + 4 CO2. It functions in the pathway porphyrin-containing compound metabolism; protoporphyrin-IX biosynthesis; coproporphyrinogen-III from 5-aminolevulinate: step 4/4. Its function is as follows. Catalyzes the decarboxylation of four acetate groups of uroporphyrinogen-III to yield coproporphyrinogen-III. The polypeptide is Uroporphyrinogen decarboxylase (Hydrogenobaculum sp. (strain Y04AAS1)).